The chain runs to 141 residues: MRAVVQRVDGASVVVDGETVGAIDGEGLCVLVGVTHDDTKEKAAQLARKLWSVRILHDEKSCSDLDAPLLVISQFTLYGDARKGRRPTWNAAAPGDVAEPLVDEVVAQLRALGATVATGRFGAQMRVSLTNDGPFTVLVEV.

Positions 133 to 134 (GP) match the Gly-cisPro motif, important for rejection of L-amino acids motif.

This sequence belongs to the DTD family. In terms of assembly, homodimer.

It localises to the cytoplasm. It carries out the reaction glycyl-tRNA(Ala) + H2O = tRNA(Ala) + glycine + H(+). It catalyses the reaction a D-aminoacyl-tRNA + H2O = a tRNA + a D-alpha-amino acid + H(+). In terms of biological role, an aminoacyl-tRNA editing enzyme that deacylates mischarged D-aminoacyl-tRNAs. Also deacylates mischarged glycyl-tRNA(Ala), protecting cells against glycine mischarging by AlaRS. Acts via tRNA-based rather than protein-based catalysis; rejects L-amino acids rather than detecting D-amino acids in the active site. By recycling D-aminoacyl-tRNA to D-amino acids and free tRNA molecules, this enzyme counteracts the toxicity associated with the formation of D-aminoacyl-tRNA entities in vivo and helps enforce protein L-homochirality. The protein is D-aminoacyl-tRNA deacylase of Streptomyces coelicolor (strain ATCC BAA-471 / A3(2) / M145).